The primary structure comprises 250 residues: Ribonuclease HII (250 aa).

In terms of domain architecture, RNase H type-2 spans 66-250 (ELVAGVDEVG…TFAPVSDFFK (185 aa)). The a divalent metal cation site is built by aspartate 72, glutamate 73, and aspartate 164.

The protein belongs to the RNase HII family. It depends on Mn(2+) as a cofactor. Mg(2+) is required as a cofactor.

The protein resides in the cytoplasm. The enzyme catalyses Endonucleolytic cleavage to 5'-phosphomonoester.. In terms of biological role, endonuclease that specifically degrades the RNA of RNA-DNA hybrids. In Lactobacillus helveticus (strain DPC 4571), this protein is Ribonuclease HII.